The following is a 311-amino-acid chain: Replicative helicase loader DnaI (311 aa).

Residues 1–136 (MEPIGRSLQG…LGATFQQVDI (136 aa)) form an N-terminal domain (Nd) region. Residues cysteine 67, cysteine 70, histidine 84, and cysteine 101 each contribute to the Zn(2+) site. The C-terminal domain (Cd) stretch occupies residues 137-311 (SDPSRLAMFQ…RLDGENRRHP (175 aa)). Residue 168-175 (GKFGVGKT) coordinates ATP.

It belongs to the DnaI family. In terms of assembly, the DNA replisome assembles sequentially on oriC in this order; DnaA, DnaD, DnaB, DnaI-DnaC helicase. Monomer with a very minor amount of dimer in solution. Interacts with replicative helicase (from G.stearothermophilus, called DnaB); this interaction is disrupted by DnaD. Interacts with replicative helicase DnaC, forms a DnaC(6):DnaI(6) complex. Interacts with the helicase as 3 dimers. A stable complex with DnaG primase, DnaI(6):helicase(6):DnaG(3) fragment can be isolated; DnaI and DnaG do not contact each other (helicase and DnaG in this complex are derived from G.stearothermophilus). The cofactor is Zn(2+).

The protein localises to the cytoplasm. It carries out the reaction ATP + H2O = ADP + phosphate + H(+). Its function is as follows. Helps load the DnaC replicative helicase onto single-stranded (ss)DNA and simulates the helicase activity; in the presence of DnaB more helicase activity is seen. Regulates DnaC helicase activity, at low concentrations stimulates the DNA helicase and ATPase activities of DnaC. Has no measurable ATPase activity after 1 hour incubation of 6 uM DnaI with or without DNA. Another group has found the protein has weak ATPase activity that is not stimulated by ssDNA. Whole protein binds forked DNA (but not ssDNA) weakly; ATP and ADPNP (probably 5'-adenylyl beta, gamma-imidodiphosphate) have no effect on DNA binding. DnaB, DnaD and DnaI may be required for a PriA-independent pathway of replication fork restart. This is Replicative helicase loader DnaI from Bacillus subtilis (strain 168).